Here is an 89-residue protein sequence, read N- to C-terminus: MAISKEKKNEIIAQYARHEGDTGSVEVQVAVLTWEINHLNSHIKEHKKDHATYRGLMKKIGHRRNLLAYLRRTDVNRYRELIQSLGLRR.

This sequence belongs to the universal ribosomal protein uS15 family. In terms of assembly, part of the 30S ribosomal subunit. Forms a bridge to the 50S subunit in the 70S ribosome, contacting the 23S rRNA.

In terms of biological role, one of the primary rRNA binding proteins, it binds directly to 16S rRNA where it helps nucleate assembly of the platform of the 30S subunit by binding and bridging several RNA helices of the 16S rRNA. Its function is as follows. Forms an intersubunit bridge (bridge B4) with the 23S rRNA of the 50S subunit in the ribosome. The sequence is that of Small ribosomal subunit protein uS15 from Streptococcus pyogenes serotype M2 (strain MGAS10270).